Reading from the N-terminus, the 422-residue chain is Acyl-[acyl-carrier-protein] desaturase 6, chloroplastic (422 aa).

A chloroplast-targeting transit peptide spans Met-1 to Arg-46. Fe cation contacts are provided by Glu-154, Glu-192, His-195, Glu-245, Glu-280, and His-283.

Belongs to the fatty acid desaturase type 2 family. Homodimer. Fe(2+) is required as a cofactor.

The protein localises to the plastid. It localises to the chloroplast. The protein operates within lipid metabolism; fatty acid metabolism. In terms of biological role, introduces a cis double bond in the acyl chain of an acyl-[acyl-carrier protein]. This Oryza sativa subsp. indica (Rice) protein is Acyl-[acyl-carrier-protein] desaturase 6, chloroplastic.